The sequence spans 772 residues: Annulin (772 aa).

S-palmitoyl cysteine attachment occurs at residues C4 and C5. The interval 15-57 is disordered; the sequence is NEGSGGGIPLMPVRGGSTRRPDSLPKPPAAVVPSPPSPGDVPD. Pro residues predominate over residues 38-53; the sequence is LPKPPAAVVPSPPSPG. Catalysis depends on residues H400 and D427. Ca(2+)-binding residues include N467, D469, E517, and E522.

This sequence belongs to the transglutaminase superfamily. Transglutaminase family. Ca(2+) is required as a cofactor. Has an annular, or ring-like expression pattern in epithelial annuli of developing limb segment boundary cells. In embryos, it is seen in gastrulating cells, in cells surrounding rapidly dividing neuroblasts, and in muscle pioneer cells invaginating to form apodemes.

It is found in the cell membrane. It carries out the reaction L-glutaminyl-[protein] + L-lysyl-[protein] = [protein]-L-lysyl-N(6)-5-L-glutamyl-[protein] + NH4(+). Its function is as follows. Participates in morphogenetic activities of the cells, maybe by stabilizing the membrane or subcortical structures of cells that are under mechanical stress. Probably catalyzes the cross-linking of proteins and the conjugation of polyamines to proteins. In Schistocerca americana (American grasshopper), this protein is Annulin.